A 561-amino-acid polypeptide reads, in one-letter code: Putative transport protein YbjL (561 aa).

5 consecutive transmembrane segments (helical) span residues 8–28, 32–52, 66–86, 94–114, and 158–178; these read LLNG…LCLG, LGSI…LLGQ, FMLF…SIFF, MLAL…GKLF, and NLSL…IVGA. 2 consecutive RCK C-terminal domains span residues 200–288 and 292–373; these read RGLD…SFRN and VFDR…RIGF. Helical transmembrane passes span 383 to 403, 406 to 426, 451 to 471, 475 to 495, and 540 to 560; these read LLAF…TFQF, FSFG…LGFM, VFMA…LGAI, MLIA…LFGA, and AIAN…WPGL.

This sequence belongs to the AAE transporter (TC 2.A.81) family. YbjL subfamily.

The protein resides in the cell membrane. The chain is Putative transport protein YbjL from Escherichia coli O139:H28 (strain E24377A / ETEC).